We begin with the raw amino-acid sequence, 176 residues long: Probable inosine/xanthosine triphosphatase (176 aa).

Residue D36 coordinates Mg(2+).

This sequence belongs to the YjjX NTPase family. Homodimer. Mg(2+) is required as a cofactor. Mn(2+) serves as cofactor.

The enzyme catalyses XTP + H2O = XDP + phosphate + H(+). The catalysed reaction is ITP + H2O = IDP + phosphate + H(+). Functionally, phosphatase that hydrolyzes non-canonical purine nucleotides such as XTP and ITP to their respective diphosphate derivatives. Probably excludes non-canonical purines from DNA/RNA precursor pool, thus preventing their incorporation into DNA/RNA and avoiding chromosomal lesions. This is Probable inosine/xanthosine triphosphatase from Saccharolobus islandicus (strain M.14.25 / Kamchatka #1) (Sulfolobus islandicus).